We begin with the raw amino-acid sequence, 347 residues long: S-adenosylmethionine:tRNA ribosyltransferase-isomerase (347 aa).

Belongs to the QueA family. Monomer.

It localises to the cytoplasm. It catalyses the reaction 7-aminomethyl-7-carbaguanosine(34) in tRNA + S-adenosyl-L-methionine = epoxyqueuosine(34) in tRNA + adenine + L-methionine + 2 H(+). It functions in the pathway tRNA modification; tRNA-queuosine biosynthesis. Its function is as follows. Transfers and isomerizes the ribose moiety from AdoMet to the 7-aminomethyl group of 7-deazaguanine (preQ1-tRNA) to give epoxyqueuosine (oQ-tRNA). The sequence is that of S-adenosylmethionine:tRNA ribosyltransferase-isomerase from Xylella fastidiosa (strain 9a5c).